An 812-amino-acid chain; its full sequence is Plasminogen (812 aa).

Residues 1-19 (MDHKEVILLFLLLLKPGQG) form the signal peptide. Residues 20 to 98 (DSLDGYISTQ…RDVILFEKRV (79 aa)) form the PAN domain. Cystine bridges form between Cys-49-Cys-73, Cys-53-Cys-61, Cys-103-Cys-181, Cys-124-Cys-164, Cys-152-Cys-176, Cys-185-Cys-262, Cys-188-Cys-316, Cys-206-Cys-245, Cys-234-Cys-257, Cys-275-Cys-352, Cys-296-Cys-335, Cys-324-Cys-347, Cys-377-Cys-454, Cys-398-Cys-437, Cys-426-Cys-449, Cys-481-Cys-560, Cys-502-Cys-543, Cys-531-Cys-555, Cys-568-Cys-687, Cys-578-Cys-586, and Cys-609-Cys-625. 5 consecutive Kringle domains span residues 103–181 (CKTG…IPEC), 184–262 (ECMY…IPRC), 275–352 (CLKG…IPSC), 377–454 (CYQS…LKRC), and 481–560 (CMYG…IPLC). Residues 582 to 810 (VVGGCVANPH…FVDWIEREMR (229 aa)) form the Peptidase S1 domain. The residue at position 598 (Ser-598) is a Phosphoserine. Residues His-624 and Asp-667 each act as charge relay system in the active site. Ser-690 is subject to Phosphoserine. 3 disulfide bridges follow: Cys-701–Cys-768, Cys-731–Cys-747, and Cys-758–Cys-786. Ser-762 functions as the Charge relay system in the catalytic mechanism.

This sequence belongs to the peptidase S1 family. Plasminogen subfamily. In terms of assembly, interacts (both mature PLG and the angiostatin peptide) with AMOT and CSPG4. Interacts (via the Kringle domains) with HRG; the interaction tethers PLG to the cell surface and enhances its activation. Interacts (via Kringle 4 domain) with ADA; the interaction stimulates PLG activation when in complex with DPP4. Angiostatin: Interacts with ATP5F1A; the interaction inhibits most of the angiogenic effects of angiostatin. In terms of processing, in the presence of the inhibitor, the activation involves only cleavage after Arg-581, yielding two chains held together by two disulfide bonds. In the absence of the inhibitor, the activation involves additionally the removal of the activation peptide.

It localises to the secreted. The catalysed reaction is Preferential cleavage: Lys-|-Xaa &gt; Arg-|-Xaa, higher selectivity than trypsin. Converts fibrin into soluble products.. Its activity is regulated as follows. Converted into plasmin by plasminogen activators, both plasminogen and its activator being bound to fibrin. Cannot be activated with streptokinase. Functionally, plasmin dissolves the fibrin of blood clots and acts as a proteolytic factor in a variety of other processes including embryonic development, tissue remodeling, tumor invasion, and inflammation. In ovulation, weakens the walls of the Graafian follicle. It activates the urokinase-type plasminogen activator, collagenases and several complement zymogens, such as C1, C4 and C5. Cleavage of fibronectin and laminin leads to cell detachment and apoptosis. Also cleaves fibrin, thrombospondin and von Willebrand factor. Its role in tissue remodeling and tumor invasion may be modulated by CSPG4. Binds to cells. Its function is as follows. Angiostatin is an angiogenesis inhibitor that blocks neovascularization and growth of experimental primary and metastatic tumors in vivo. The sequence is that of Plasminogen (Plg) from Mus musculus (Mouse).